The sequence spans 195 residues: Transcription factor LBX2 (195 aa).

2 disordered regions span residues 1 to 89 and 164 to 195; these read MNSV…KSRT and PALPDSTSSPDPGPSGPDSEPNLSDEEIQVDD. The homeobox DNA-binding region spans 84–143; the sequence is RRKSRTAFTAQQVLELERRFVFQKYLAPSERDGLAARLGLANAQVVTWFQNRRAKLKRDV. Acidic residues predominate over residues 186-195; it reads LSDEEIQVDD.

In terms of tissue distribution, expressed in the developing urogenital system, eye and brain.

It is found in the nucleus. In terms of biological role, transcription factor. This chain is Transcription factor LBX2 (Lbx2), found in Mus musculus (Mouse).